The following is a 225-amino-acid chain: UPF0758 protein Mhun_2739 (225 aa).

An MPN domain is found at 102-225 (RITEPDHILK…VTSLRSLGYL (124 aa)). Zn(2+)-binding residues include His-174, His-176, and Asp-187. The JAMM motif signature appears at 174-187 (HNHPSGNPEPSSED).

This sequence belongs to the UPF0758 family.

In Methanospirillum hungatei JF-1 (strain ATCC 27890 / DSM 864 / NBRC 100397 / JF-1), this protein is UPF0758 protein Mhun_2739.